A 161-amino-acid polypeptide reads, in one-letter code: MAKTKAVIPGSFDPITYGHIDIIERSAGRFDELHICVLKNSNKTGTFNIDERMALIEESVKHLSNVEVHNYNGLLVDFCDKIGAQTIIRGLRAVSDFEYELRLTSMNKKLNSNVETMYMMTSTNYSFISSSVVKEVAQYKADISDFVPPNVEKALKEKFKK.

S11 lines the substrate pocket. ATP-binding positions include 11–12 and H19; that span reads SF. Substrate contacts are provided by K43, L75, and R89. ATP is bound by residues 90 to 92, E100, and 125 to 131; these read GLR and YSFISSS.

This sequence belongs to the bacterial CoaD family. As to quaternary structure, homohexamer. It depends on Mg(2+) as a cofactor.

It is found in the cytoplasm. The enzyme catalyses (R)-4'-phosphopantetheine + ATP + H(+) = 3'-dephospho-CoA + diphosphate. It participates in cofactor biosynthesis; coenzyme A biosynthesis; CoA from (R)-pantothenate: step 4/5. Functionally, reversibly transfers an adenylyl group from ATP to 4'-phosphopantetheine, yielding dephospho-CoA (dPCoA) and pyrophosphate. This chain is Phosphopantetheine adenylyltransferase, found in Staphylococcus haemolyticus (strain JCSC1435).